A 560-amino-acid chain; its full sequence is Serine palmitoyltransferase 2 (560 aa).

Residues 65-85 (PMLVAVLTYVGYGVLTLFGYL) form a helical membrane-spanning segment. Lys-377 carries the post-translational modification N6-(pyridoxal phosphate)lysine.

It belongs to the class-II pyridoxal-phosphate-dependent aminotransferase family. As to quaternary structure, component of the serine palmitoyltransferase (SPT) complex, which is composed of SPTLC1, SPTLC2 or SPTLC3 and SPTSSA or SPTSSB. The heterodimer consisting of SPTLC1 and SPTLC2/SPTLC3 forms the catalytic core of the enzyme, while SPTSSA or SPTSSB subunits determine substrate specificity. SPT also interacts with ORMDL proteins, especially ORMDL3, which negatively regulate SPT activity in the presence of ceramides. Forms dimers of heterodimers with SPTLC1. Pyridoxal 5'-phosphate serves as cofactor. As to expression, expressed in astrocytes.

Its subcellular location is the endoplasmic reticulum membrane. It carries out the reaction L-serine + hexadecanoyl-CoA + H(+) = 3-oxosphinganine + CO2 + CoA. It catalyses the reaction octadecanoyl-CoA + L-serine + H(+) = 3-oxoeicosasphinganine + CO2 + CoA. The protein operates within lipid metabolism; sphingolipid metabolism. SPT complex catalytic activity is negatively regulated by ORMDL proteins, including ORMDL3, in the presence of ceramides. This mechanism allows to maintain ceramide levels at sufficient concentrations for the production of complex sphingolipids, but which prevents the accumulation of ceramides to levels that trigger apoptosis. In terms of biological role, component of the serine palmitoyltransferase multisubunit enzyme (SPT) that catalyzes the initial and rate-limiting step in sphingolipid biosynthesis by condensing L-serine and activated acyl-CoA (most commonly palmitoyl-CoA) to form long-chain bases. The SPT complex is composed of SPTLC1, SPTLC2 or SPTLC3 and SPTSSA or SPTSSB. Within this complex, the heterodimer consisting of SPTLC1 and SPTLC2/SPTLC3 forms the catalytic core. The composition of the serine palmitoyltransferase (SPT) complex determines the substrate preference. The SPTLC1-SPTLC2-SPTSSA complex shows a strong preference for C16-CoA substrate, while the SPTLC1-SPTLC3-SPTSSA isozyme uses both C14-CoA and C16-CoA as substrates, with a slight preference for C14-CoA. The SPTLC1-SPTLC2-SPTSSB complex shows a strong preference for C18-CoA substrate, while the SPTLC1-SPTLC3-SPTSSB isozyme displays an ability to use a broader range of acyl-CoAs, without apparent preference. Crucial for adipogenesis. In Rattus norvegicus (Rat), this protein is Serine palmitoyltransferase 2.